Consider the following 60-residue polypeptide: Venom protein 4.1 (60 aa).

A signal peptide spans 1–26 (MKALCAILLVLFACSVMFEHFSISTA).

This sequence belongs to the non-disulfide-bridged peptide (NDBP) superfamily. Expressed by the venom gland.

The protein resides in the secreted. The protein is Venom protein 4.1 of Lychas mucronatus (Chinese swimming scorpion).